Reading from the N-terminus, the 225-residue chain is MHGLFISFEGIDGAGKSTHIAGLADAFRAQGRAVTLTREPGGTPLAEKLRDLVLNDAMDSLTEALLIFAARRDHLVRVIAPALVRGDVVLCDRFTDATFAYQGAGRGFDLAVLATLEQWVQSDEGLLGDPAGNFPMKPEVETVIEPHLTVWFDLPPEEAALRLQGARVPDKFEAQPLEFFRRVAKGYSDRQQGHPERFARINASQPRDVVWQAVRQVFVAKGWLA.

10-17 (GIDGAGKS) serves as a coordination point for ATP.

This sequence belongs to the thymidylate kinase family.

The catalysed reaction is dTMP + ATP = dTDP + ADP. Its function is as follows. Phosphorylation of dTMP to form dTDP in both de novo and salvage pathways of dTTP synthesis. The protein is Thymidylate kinase of Polaromonas sp. (strain JS666 / ATCC BAA-500).